The primary structure comprises 416 residues: Phosphoglycerate kinase (416 aa).

Residues 24–26 (DLN), Arg-40, 63–66 (HLGR), Arg-122, and Arg-162 each bind substrate. ATP contacts are provided by residues Lys-212, Gly-300, Glu-331, and 360-363 (GGDS).

The protein belongs to the phosphoglycerate kinase family. Monomer.

The protein localises to the cytoplasm. The catalysed reaction is (2R)-3-phosphoglycerate + ATP = (2R)-3-phospho-glyceroyl phosphate + ADP. It functions in the pathway carbohydrate degradation; glycolysis; pyruvate from D-glyceraldehyde 3-phosphate: step 2/5. The protein is Phosphoglycerate kinase of Mycobacterium ulcerans (strain Agy99).